A 960-amino-acid chain; its full sequence is Protein mono-ADP-ribosyltransferase PARP10 (960 aa).

An ADP-ribosyl glutamic acid modification is found at Glu103. A compositionally biased stretch (polar residues) spans 325-341 (SMGSTSPVDPVESSTEL). Residues 325–346 (SMGSTSPVDPVESSTELPEQVG) form a disordered region. Ser381 and Ser388 each carry phosphoserine. A disordered region spans residues 553–576 (SPHGGEDRVPLEMEKEKPGGPGET). The span at 555–570 (HGGEDRVPLEMEKEKP) shows a compositional bias: basic and acidic residues. The Ubiquitin-interacting motif lies at 604–621 (LEEEATLQLAIHRSLESQ). Residue Ser617 is modified to Phosphoserine. Residues 649-856 (DEDTGGEAQL…CAHGFNRSFC (208 aa)) form a myc binding region. One can recognise a PARP catalytic domain in the interval 755 to 960 (PNLSEQGLKE…TCKNILPGTP (206 aa)). The PIP-box motif lies at 780 to 787 (QDVVRAFY). ADP-ribosyl glutamic acid is present on Glu831.

The protein belongs to the ARTD/PARP family. Interacts with MYC. Interacts with PARP14. Interacts (via-PIP box and ubiquitin-interacting motifs) with PCNA. In terms of processing, stimulated through its phosphorylation by CDK2. Acquires CDK-dependent phosphorylation through late-G1 to S phase, and from prometaphase to cytokinesis in the nucleolar organizing regions. Phosphorylation is suppressed in growth-arrested cells. Auto-mono-ADP-ribosylated on glutamate and lysine residues.

It localises to the cytoplasm. The protein localises to the nucleus. It catalyses the reaction L-lysyl-[protein] + NAD(+) = N(6)-(ADP-D-ribosyl)-L-lysyl-[protein] + nicotinamide + H(+). The enzyme catalyses L-aspartyl-[protein] + NAD(+) = 4-O-(ADP-D-ribosyl)-L-aspartyl-[protein] + nicotinamide. It carries out the reaction L-glutamyl-[protein] + NAD(+) = 5-O-(ADP-D-ribosyl)-L-glutamyl-[protein] + nicotinamide. ADP-ribosyltransferase that mediates mono-ADP-ribosylation of glutamate and aspartate residues on target proteins. In contrast to PARP1 and PARP2, it is not able to mediate poly-ADP-ribosylation. Catalyzes mono-ADP-ribosylation of GSK3B, leading to negatively regulate GSK3B kinase activity. Involved in translesion DNA synthesis in response to DNA damage via its interaction with PCNA. The polypeptide is Protein mono-ADP-ribosyltransferase PARP10 (Mus musculus (Mouse)).